Here is a 284-residue protein sequence, read N- to C-terminus: Nucleotide-binding protein Sden_0486 (284 aa).

8 to 15 (GRSGSGKS) contributes to the ATP binding site. 56–59 (DVRN) contributes to the GTP binding site.

Belongs to the RapZ-like family.

Functionally, displays ATPase and GTPase activities. This Shewanella denitrificans (strain OS217 / ATCC BAA-1090 / DSM 15013) protein is Nucleotide-binding protein Sden_0486.